The chain runs to 330 residues: Glucokinase (330 aa).

14–19 (ADIGGT) lines the ATP pocket.

Belongs to the bacterial glucokinase family.

The protein localises to the cytoplasm. The enzyme catalyses D-glucose + ATP = D-glucose 6-phosphate + ADP + H(+). In Colwellia psychrerythraea (strain 34H / ATCC BAA-681) (Vibrio psychroerythus), this protein is Glucokinase.